We begin with the raw amino-acid sequence, 348 residues long: Interferon regulatory factor 2 (348 aa).

A DNA-binding region (IRF tryptophan pentad repeat) is located at residues 5–113; it reads RMRMRPWLEE…NAFRVYRMLP (109 aa). 2 positions are modified to N6-acetyllysine: lysine 75 and lysine 78. Positions 117-137 are disordered; that stretch reads RPSKKGKKTKSEKDDKFKQIK. The span at 125–137 shows a compositional bias: basic and acidic residues; the sequence is TKSEKDDKFKQIK. Residues lysine 137, lysine 164, and lysine 291 each participate in a glycyl lysine isopeptide (Lys-Gly) (interchain with G-Cter in SUMO) cross-link. Residues 311–348 are disordered; sequence LPQVVSTASTSSSRPDRETRASVIKKTSDITQSRVKSC. Composition is skewed to polar residues over residues 314–323 and 339–348; these read VVSTASTSSS and DITQSRVKSC.

It belongs to the IRF family. Interacts with CREBBP in growing cells; the interaction acetylates IRF2 and regulates IRF2-dependent H4 promoter activity.

The protein resides in the nucleus. Functionally, specifically binds to the upstream regulatory region of type I IFN and IFN-inducible MHC class I genes (the interferon consensus sequence (ICS)) and represses those genes. Also acts as an activator for several genes including H4 and IL7. Constitutively binds to the ISRE promoter to activate IL7. Involved in cell cycle regulation through binding the site II (HiNF-M) promoter region of H4 and activating transcription during cell growth. Antagonizes IRF1 transcriptional activation. The polypeptide is Interferon regulatory factor 2 (IRF2) (Gallus gallus (Chicken)).